We begin with the raw amino-acid sequence, 460 residues long: A-type ATP synthase subunit B (460 aa).

The protein belongs to the ATPase alpha/beta chains family. In terms of assembly, has multiple subunits with at least A(3), B(3), C, D, E, F, H, I and proteolipid K(x).

Its subcellular location is the cell membrane. Functionally, component of the A-type ATP synthase that produces ATP from ADP in the presence of a proton gradient across the membrane. The B chain is a regulatory subunit. The sequence is that of A-type ATP synthase subunit B from Methanosarcina barkeri (strain Fusaro / DSM 804).